Consider the following 1417-residue polypeptide: DExH-box ATP-dependent RNA helicase DExH4, chloroplastic (1417 aa).

The span at 1–12 shows a compositional bias: basic residues; that stretch reads MAPTKKPQKNKQ. Positions 1–37 are disordered; sequence MAPTKKPQKNKQSKNEIASSLIPNSGHKKPSKAPKLL. The transit peptide at 1–61 directs the protein to the chloroplast; sequence MAPTKKPQKN…NFRRTPSPVT (61 aa). In terms of domain architecture, Helicase ATP-binding spans 607–781; it reads LQKLKEKDVL…FGQCPIITAQ (175 aa). 620–627 lines the ATP pocket; it reads GETGSGKT. Residues 722 to 725 carry the DEIH box motif; sequence DEVH. The Helicase C-terminal domain maps to 868–1043; that stretch reads LLEELICHID…ELCLHIKLLG (176 aa).

This sequence belongs to the DExH box helicase family.

The protein resides in the plastid. It localises to the chloroplast. The catalysed reaction is ATP + H2O = ADP + phosphate + H(+). This Arabidopsis thaliana (Mouse-ear cress) protein is DExH-box ATP-dependent RNA helicase DExH4, chloroplastic.